The sequence spans 365 residues: Phosphate acyltransferase (365 aa).

This sequence belongs to the PlsX family. In terms of assembly, homodimer. Probably interacts with PlsY.

Its subcellular location is the cytoplasm. It carries out the reaction a fatty acyl-[ACP] + phosphate = an acyl phosphate + holo-[ACP]. It functions in the pathway lipid metabolism; phospholipid metabolism. In terms of biological role, catalyzes the reversible formation of acyl-phosphate (acyl-PO(4)) from acyl-[acyl-carrier-protein] (acyl-ACP). This enzyme utilizes acyl-ACP as fatty acyl donor, but not acyl-CoA. In Jannaschia sp. (strain CCS1), this protein is Phosphate acyltransferase.